A 282-amino-acid chain; its full sequence is Protoheme IX farnesyltransferase (282 aa).

The next 9 helical transmembrane spans lie at leucine 9–alanine 29, leucine 39–phenylalanine 59, leucine 79–leucine 99, leucine 102–valine 122, valine 139–isoleucine 159, leucine 165–leucine 185, isoleucine 210–serine 230, alanine 231–isoleucine 251, and valine 261–methionine 281.

It belongs to the UbiA prenyltransferase family. Protoheme IX farnesyltransferase subfamily.

The protein localises to the cell inner membrane. The enzyme catalyses heme b + (2E,6E)-farnesyl diphosphate + H2O = Fe(II)-heme o + diphosphate. The protein operates within porphyrin-containing compound metabolism; heme O biosynthesis; heme O from protoheme: step 1/1. In terms of biological role, converts heme B (protoheme IX) to heme O by substitution of the vinyl group on carbon 2 of heme B porphyrin ring with a hydroxyethyl farnesyl side group. The chain is Protoheme IX farnesyltransferase from Francisella tularensis subsp. holarctica (strain LVS).